Reading from the N-terminus, the 76-residue chain is Exodeoxyribonuclease 7 small subunit (76 aa).

The protein belongs to the XseB family. Heterooligomer composed of large and small subunits.

The protein resides in the cytoplasm. The enzyme catalyses Exonucleolytic cleavage in either 5'- to 3'- or 3'- to 5'-direction to yield nucleoside 5'-phosphates.. Bidirectionally degrades single-stranded DNA into large acid-insoluble oligonucleotides, which are then degraded further into small acid-soluble oligonucleotides. In Bacillus cereus (strain G9842), this protein is Exodeoxyribonuclease 7 small subunit.